Reading from the N-terminus, the 274-residue chain is Probable starch degradation products transport system permease protein AmyC (274 aa).

6 helical membrane-spanning segments follow: residues 11 to 31 (LTFL…IILV), 73 to 93 (LIIT…TAYA), 103 to 123 (VIIY…VMIP), 139 to 159 (LVFM…YGAL), 184 to 204 (IILP…IMWI), and 238 to 258 (WNLG…FYFL). An ABC transmembrane type-1 domain is found at 69–259 (FSNTLIITVF…LPVVIFYFLA (191 aa)).

Belongs to the binding-protein-dependent transport system permease family. MalFG subfamily.

The protein resides in the cell membrane. Probably part of a binding-protein-dependent transport system starch degradation products. Probably responsible for the translocation of the substrate across the membrane. The chain is Probable starch degradation products transport system permease protein AmyC (amyC) from Thermoanaerobacterium thermosulfurigenes (Clostridium thermosulfurogenes).